Consider the following 402-residue polypeptide: Diaminopimelate decarboxylase (402 aa).

At K45 the chain carries N6-(pyridoxal phosphate)lysine. Pyridoxal 5'-phosphate contacts are provided by residues G224 and 259–262 (EPGR). R262, R298, and Y302 together coordinate substrate. The active-site Proton donor is C327. Substrate is bound by residues E328 and Y356. Y356 is a pyridoxal 5'-phosphate binding site.

This sequence belongs to the Orn/Lys/Arg decarboxylase class-II family. LysA subfamily. As to quaternary structure, homodimer. The cofactor is pyridoxal 5'-phosphate.

The catalysed reaction is meso-2,6-diaminopimelate + H(+) = L-lysine + CO2. It functions in the pathway amino-acid biosynthesis; L-lysine biosynthesis via DAP pathway; L-lysine from DL-2,6-diaminopimelate: step 1/1. In terms of biological role, specifically catalyzes the decarboxylation of meso-diaminopimelate (meso-DAP) to L-lysine. The polypeptide is Diaminopimelate decarboxylase (Campylobacter jejuni subsp. jejuni serotype O:2 (strain ATCC 700819 / NCTC 11168)).